An 83-amino-acid polypeptide reads, in one-letter code: Glutaredoxin 3 (83 aa).

The Glutaredoxin domain occupies 2–83 (ANVEIYTKET…ARGGLDPLLK (82 aa)). Cys-12 and Cys-15 are oxidised to a cystine.

This sequence belongs to the glutaredoxin family. In terms of assembly, monomer.

In terms of biological role, the disulfide bond functions as an electron carrier in the glutathione-dependent synthesis of deoxyribonucleotides by the enzyme ribonucleotide reductase. In addition, it is also involved in reducing some disulfides in a coupled system with glutathione reductase. This Escherichia coli O157:H7 protein is Glutaredoxin 3 (grxC).